We begin with the raw amino-acid sequence, 241 residues long: Phosphoadenosine 5'-phosphosulfate reductase (241 aa).

C235 serves as the catalytic Nucleophile; cysteine thiosulfonate intermediate.

Belongs to the PAPS reductase family. CysH subfamily.

The protein localises to the cytoplasm. The catalysed reaction is [thioredoxin]-disulfide + sulfite + adenosine 3',5'-bisphosphate + 2 H(+) = [thioredoxin]-dithiol + 3'-phosphoadenylyl sulfate. It functions in the pathway sulfur metabolism; hydrogen sulfide biosynthesis; sulfite from sulfate: step 3/3. Catalyzes the formation of sulfite from phosphoadenosine 5'-phosphosulfate (PAPS) using thioredoxin as an electron donor. In Xanthomonas euvesicatoria pv. vesicatoria (strain 85-10) (Xanthomonas campestris pv. vesicatoria), this protein is Phosphoadenosine 5'-phosphosulfate reductase.